A 133-amino-acid polypeptide reads, in one-letter code: ATP synthase epsilon chain, chloroplastic (133 aa).

Belongs to the ATPase epsilon chain family. In terms of assembly, F-type ATPases have 2 components, CF(1) - the catalytic core - and CF(0) - the membrane proton channel. CF(1) has five subunits: alpha(3), beta(3), gamma(1), delta(1), epsilon(1). CF(0) has three main subunits: a, b and c.

It localises to the plastid. The protein resides in the chloroplast thylakoid membrane. In terms of biological role, produces ATP from ADP in the presence of a proton gradient across the membrane. This Atropa belladonna (Belladonna) protein is ATP synthase epsilon chain, chloroplastic.